Here is a 218-residue protein sequence, read N- to C-terminus: MLHSPHKQPQNHKCGANFLQEDSKEALVFKWLISAGHYQPPRPTESVSALSTVHAVIFKAASSIYNRGHKFYLEKKGGTMASNSLFSAVTPCQQSFFWNKTLPVAFKVVALGEVPDGTVVTVMAGNDENYSAELRNASAVMKNQVARFNDLRFVGRSGRGKSFTLTITVFTNPPQVATYHRAIKVTVDGPREPRRHRQKLDDSKPSLFSDRLSDLGRI.

One can recognise a Runt domain in the interval 67-195 (RGHKFYLEKK…TVDGPREPRR (129 aa)). The required for interaction with FOXO1 stretch occupies residues 122-138 (VMAGNDENYSAELRNAS). Residues 189–218 (GPREPRRHRQKLDDSKPSLFSDRLSDLGRI) are disordered. Lys-204 is covalently cross-linked (Glycyl lysine isopeptide (Lys-Gly) (interchain with G-Cter in SUMO2)).

In terms of assembly, heterodimer of an alpha and a beta subunit. The alpha subunit binds DNA as a monomer and through the Runt domain. DNA-binding is increased by heterodimerization. Interacts with XRCC6 (Ku70) and XRCC5 (Ku80). Interacts with CCNB1, KAT6A and KAT6B. Interacts with HIVEP3. Interacts with IFI204. Interaction with SATB2; the interaction results in enhanced DNA binding and transactivation by these transcription factors. Binds to HIPK3. Interacts with FOXO1 (via a C-terminal region); the interaction inhibits RUNX2 transcriptional activity towards BGLAP. Interacts with FOXP3. Interacts with TMEM119. Interacts with OLFM2. Interacts with IPO7; the interaction inhibits RUNX2 nuclear translocation in osteoblasts. Phosphorylated; probably by MAP kinases (MAPK). Phosphorylation by HIPK3 is required for the SPEN/MINT and FGF2 transactivation during osteoblastic differentiation.

The protein localises to the nucleus. It is found in the cytoplasm. Transcription factor involved in osteoblastic differentiation and skeletal morphogenesis. Essential for the maturation of osteoblasts and both intramembranous and endochondral ossification. CBF binds to the core site, 5'-PYGPYGGT-3', of a number of enhancers and promoters, including murine leukemia virus, polyomavirus enhancer, T-cell receptor enhancers, osteocalcin, osteopontin, bone sialoprotein, alpha 1(I) collagen, LCK, IL-3 and GM-CSF promoters. Inhibits KAT6B-dependent transcriptional activation. In osteoblasts, supports transcription activation: synergizes with SPEN/MINT to enhance FGFR2-mediated activation of the osteocalcin FGF-responsive element (OCFRE). This is Runt-related transcription factor 2 (Runx2) from Rattus norvegicus (Rat).